The sequence spans 377 residues: Histidinol-phosphate aminotransferase 2 (377 aa).

The segment at 17–44 (NLSPYVPGEQPQHDDLCKLNTNENPFPP) is disordered. Residue lysine 228 is modified to N6-(pyridoxal phosphate)lysine.

It belongs to the class-II pyridoxal-phosphate-dependent aminotransferase family. Histidinol-phosphate aminotransferase subfamily. In terms of assembly, homodimer. Requires pyridoxal 5'-phosphate as cofactor.

The catalysed reaction is L-histidinol phosphate + 2-oxoglutarate = 3-(imidazol-4-yl)-2-oxopropyl phosphate + L-glutamate. It participates in amino-acid biosynthesis; L-histidine biosynthesis; L-histidine from 5-phospho-alpha-D-ribose 1-diphosphate: step 7/9. This chain is Histidinol-phosphate aminotransferase 2, found in Psychrobacter arcticus (strain DSM 17307 / VKM B-2377 / 273-4).